Reading from the N-terminus, the 182-residue chain is Translation initiation factor IF-3, chloroplastic (182 aa).

This sequence belongs to the IF-3 family. In terms of assembly, monomer.

The protein localises to the plastid. The protein resides in the chloroplast. Functionally, IF-3 binds to the 30S ribosomal subunit and shifts the equilibrium between 70S ribosomes and their 50S and 30S subunits in favor of the free subunits, thus enhancing the availability of 30S subunits on which protein synthesis initiation begins. The polypeptide is Translation initiation factor IF-3, chloroplastic (Porphyra purpurea (Red seaweed)).